We begin with the raw amino-acid sequence, 179 residues long: Gut granule loss protein 3 (179 aa).

The interval 40–59 (DLDSASSGVGSSTCTEEQES) is disordered. Polar residues predominate over residues 42–54 (DSASSGVGSSTCT).

The polypeptide is Gut granule loss protein 3 (glo-3) (Caenorhabditis elegans).